Here is a 232-residue protein sequence, read N- to C-terminus: LexA repressor (232 aa).

A DNA-binding region (H-T-H motif) is located at residues Phe26–Thr46. Residues Ser153 and Lys191 each act as for autocatalytic cleavage activity in the active site.

The protein belongs to the peptidase S24 family. Homodimer.

It catalyses the reaction Hydrolysis of Ala-|-Gly bond in repressor LexA.. In terms of biological role, represses a number of genes involved in the response to DNA damage (SOS response), including recA and lexA. In the presence of single-stranded DNA, RecA interacts with LexA causing an autocatalytic cleavage which disrupts the DNA-binding part of LexA, leading to derepression of the SOS regulon and eventually DNA repair. The sequence is that of LexA repressor from Bradyrhizobium sp. (strain BTAi1 / ATCC BAA-1182).